The primary structure comprises 216 residues: Ras-like protein (216 aa).

Position 16–23 (16–23) interacts with GTP; it reads GGGGVGKS. The short motif at 38–46 is the Effector region element; that stretch reads YDPTIEDSY. Residues 63–67 and 122–125 each bind GTP; these read DTAGQ and NKCD. S-palmitoyl cysteine attachment occurs at residues cysteine 209 and cysteine 210. Cysteine 213 bears the Cysteine methyl ester mark. A lipid anchor (S-geranylgeranyl cysteine) is attached at cysteine 213. Residues 214-216 constitute a propeptide, removed in mature form; sequence VVL.

Belongs to the small GTPase superfamily. Ras family.

It localises to the cell membrane. It carries out the reaction GTP + H2O = GDP + phosphate + H(+). With respect to regulation, alternates between an inactive form bound to GDP and an active form bound to GTP. Activated by a guanine nucleotide-exchange factor (GEF) and inactivated by a GTPase-activating protein (GAP). The sequence is that of Ras-like protein (RAS1) from Cryptococcus neoformans var. neoformans serotype D (strain B-3501A) (Filobasidiella neoformans).